We begin with the raw amino-acid sequence, 344 residues long: 4'-phosphopantetheinyl transferase NpgA (344 aa).

The protein belongs to the P-Pant transferase superfamily.

The enzyme catalyses apo-[ACP] + CoA = holo-[ACP] + adenosine 3',5'-bisphosphate + H(+). Functionally, transfers the 4'-phosphopantetheine moiety from coenzyme A to a Ser of an acyl-carrier-protein. The enzyme is able to transfer the cofactor to a broad range of enzymes with acyl- or peptidyl-carrier protein domains. Required for primary biological processes such as growth and asexual/sexual development, and activates target enzymes involved in the synthesis of metabolites such as fatty acids, polyketides and nonribosomal peptides, lysine, siderophore, penicillin, sterigmatocystin, shamixantone, dehydroaustinol, and pigments. The polypeptide is 4'-phosphopantetheinyl transferase NpgA (npgA) (Emericella nidulans (strain FGSC A4 / ATCC 38163 / CBS 112.46 / NRRL 194 / M139) (Aspergillus nidulans)).